A 518-amino-acid polypeptide reads, in one-letter code: Chaperonin GroEL (518 aa).

Residues 30–33, K51, 87–91, and G415 contribute to the ATP site; these read TLGP and DGTTT.

The protein belongs to the chaperonin (HSP60) family. As to quaternary structure, forms a cylinder of 14 subunits composed of two heptameric rings stacked back-to-back. Interacts with the co-chaperonin GroES.

The protein localises to the cytoplasm. It carries out the reaction ATP + H2O + a folded polypeptide = ADP + phosphate + an unfolded polypeptide.. Its function is as follows. Together with its co-chaperonin GroES, plays an essential role in assisting protein folding. The GroEL-GroES system forms a nano-cage that allows encapsulation of the non-native substrate proteins and provides a physical environment optimized to promote and accelerate protein folding. The chain is Chaperonin GroEL from Desulfotalea psychrophila (strain LSv54 / DSM 12343).